Consider the following 454-residue polypeptide: Natural cytotoxicity triggering receptor 3 ligand 1 (454 aa).

Positions 1-24 (MTWRAAASTCAALLILLWALTTEG) are cleaved as a signal peptide. Residues 25–262 (DLKVEMMAGG…SETEKTDNFS (238 aa)) are Extracellular-facing. Residues 27 to 138 (KVEMMAGGTQ…LKAQGTVQLE (112 aa)) form the Ig-like V-type domain. 2 N-linked (GlcNAc...) asparagine glycosylation sites follow: asparagine 43 and asparagine 57. A disulfide bond links cysteine 48 and cysteine 122. Interaction with NCR3 stretches follow at residues 59-62 (TSMG) and 127-130 (TPLK). In terms of domain architecture, Ig-like C1-type spans 143–244 (PASRLLLDQV…LHTPLRSNFT (102 aa)). The cysteines at positions 163 and 228 are disulfide-linked. N-linked (GlcNAc...) asparagine glycosylation is found at asparagine 174, asparagine 208, asparagine 216, asparagine 242, and asparagine 260. A helical membrane pass occupies residues 263 to 283 (IHWWPISFIGVGLVLLIVLIP). Over 284–454 (WKKICNKSSS…QPPTLLLPLQ (171 aa)) the chain is Cytoplasmic. Positions 291–429 (SSSAYTPLKC…APILPVSPIW (139 aa)) are retroviral-Gag-like. A disordered region spans residues 395–454 (GKSIDDNSTKSEKQTPREHSDAVPDAPILPVSPIWEPPPATTSTTPVLSSQPPTLLLPLQ). Residues 397 to 416 (SIDDNSTKSEKQTPREHSDA) are compositionally biased toward basic and acidic residues. The span at 435–454 (TTSTTPVLSSQPPTLLLPLQ) shows a compositional bias: low complexity.

As to quaternary structure, monomer. Interacts specifically with NCR3, but not with other natural killer cell-activating receptors, including NCR1, NCR2 and KLRK1. Not detected in any normal tissue tested. Expressed at the surface of several tumor cell lines including T and B-lymphomas, myeloid leukemias, melanomas, carcinomas and large T SV40 antigen-transformed cells (at protein level).

It is found in the cell membrane. Functionally, triggers NCR3-dependent natural killer cell activation. The sequence is that of Natural cytotoxicity triggering receptor 3 ligand 1 (NCR3LG1) from Homo sapiens (Human).